Consider the following 139-residue polypeptide: Ribulose bisphosphate carboxylase small subunit (139 aa).

Belongs to the RuBisCO small chain family. Heterohexadecamer of 8 large and 8 small subunits.

The protein resides in the plastid. It is found in the chloroplast. Its function is as follows. RuBisCO catalyzes two reactions: the carboxylation of D-ribulose 1,5-bisphosphate, the primary event in carbon dioxide fixation, as well as the oxidative fragmentation of the pentose substrate in the photorespiration process. Both reactions occur simultaneously and in competition at the same active site. Although the small subunit is not catalytic it is essential for maximal activity. The sequence is that of Ribulose bisphosphate carboxylase small subunit from Guillardia theta (Cryptophyte).